The chain runs to 1213 residues: tRNA wybutosine-synthesizing protein 4 (1213 aa).

2 stretches are compositionally biased toward low complexity: residues 1–13 and 39–52; these read METT…PATT and ATTT…TTPT. The segment at 1–76 is disordered; sequence METTEEVVAP…DDQVMGTNNS (76 aa). Positions 53–67 are enriched in basic and acidic residues; the sequence is HNEHASAKDPRKAQD. 3 residues coordinate S-adenosyl-L-methionine: R117, G148, and D180. The span at 215–248 shows a compositional bias: low complexity; sequence STPAATTTAAATTTTTTELKTTAATASSTSTEAP. A disordered region spans residues 215 to 272; the sequence is STPAATTTAAATTTTTTELKTTAATASSTSTEAPQKPKKSPKPKDKSKAARAPAPTTA. S-adenosyl-L-methionine contacts are provided by residues 289-290 and E318; that span reads DL. Positions 879–900 are disordered; that stretch reads EPRSLPLRNQAPNGAEGNANGS. Residues 1006–1166 form the JmjC domain; the sequence is PTEKPAVLSD…YAAGKDVYGN (161 aa).

This sequence belongs to the methyltransferase superfamily. LCMT family.

The catalysed reaction is 7-[(3S)-3-amino-3-carboxypropyl]wyosine(37) in tRNA(Phe) + S-adenosyl-L-methionine = 7-[(3S)-(3-amino-3-methoxycarbonyl)propyl]wyosine(37) in tRNA(Phe) + S-adenosyl-L-homocysteine. The enzyme catalyses 7-[(3S)-(3-amino-3-methoxycarbonyl)propyl]wyosine(37) in tRNA(Phe) + S-adenosyl-L-methionine + CO2 = wybutosine(37) in tRNA(Phe) + S-adenosyl-L-homocysteine + 2 H(+). The protein operates within tRNA modification; wybutosine-tRNA(Phe) biosynthesis. Probable S-adenosyl-L-methionine-dependent methyltransferase that acts as a component of the wybutosine biosynthesis pathway. Wybutosine is a hyper modified guanosine with a tricyclic base found at the 3'-position adjacent to the anticodon of eukaryotic phenylalanine tRNA. May methylate the carboxyl group of leucine residues to form alpha-leucine ester residues. The chain is tRNA wybutosine-synthesizing protein 4 (lcm-2) from Neurospora crassa (strain ATCC 24698 / 74-OR23-1A / CBS 708.71 / DSM 1257 / FGSC 987).